The chain runs to 589 residues: Parathyroid hormone/parathyroid hormone-related peptide receptor (589 aa).

The signal sequence occupies residues 1 to 28 (MGAARIAPGLALLLCCPVLSSAYALVDA). At 29–188 (DDVMTKEEQI…REREVFDRLG (160 aa)) the chain is on the extracellular side. Intrachain disulfides connect Cys-48–Cys-117, Cys-108–Cys-148, and Cys-131–Cys-170. Residues 64-105 (ESDKGWASASTSGKPKKEKPSGKLHPESEEDKEVPTGSRPRG) form a disordered region. Positions 81–90 (EKPSGKLHPE) are enriched in basic and acidic residues. Asn-151, Asn-161, Asn-166, and Asn-176 each carry an N-linked (GlcNAc...) asparagine glycan. A helical transmembrane segment spans residues 189 to 209 (MIYTVGYSVSLASLTVAVLIL). The Cytoplasmic segment spans residues 210–223 (AYFRRLHCTRNYIH). The helical transmembrane segment at 224–244 (MHLFLSFMLRAVSIFVKDAVL) threads the bilayer. Residues 245–294 (YSGTALDEAERLTEEELRAIAQAPPPPAAAAGYVGCRVAVTFFLYFLATN) lie on the Extracellular side of the membrane. A helical transmembrane segment spans residues 295 to 315 (YYWILVEGLYLHSLIFMAFFS). Residues 316–318 (EKK) lie on the Cytoplasmic side of the membrane. Residues 319-339 (YLWGFTVFGWGLPAIFVAVWV) form a helical membrane-spanning segment. Topologically, residues 340–360 (SVRATLANTGCWDLSSGNKKW) are extracellular. The chain crosses the membrane as a helical span at residues 361–381 (IIQVPILASIVLNFILFINIV). Over 382-404 (RVLATKLRETNAGRCDTRQQYRK) the chain is Cytoplasmic. A helical transmembrane segment spans residues 405–425 (LLKSTLVLMPLFGVHYIVFMA). The Extracellular segment spans residues 426–439 (TPYTEVSGTLWQVQ). A helical membrane pass occupies residues 440–460 (MHYEMLFNSFQGFFVAIIYCF). Over 461-589 (CNGEVQAEIK…LLQEEWETVM (129 aa)) the chain is Cytoplasmic. The short motif at 473-476 (WSRW) is the Important for interaction with G proteins element. The segment at 524-549 (AATTNGHPPLPGHTKSGSPALQATPP) is disordered. A Phosphothreonine modification is found at Thr-547.

It belongs to the G-protein coupled receptor 2 family. In terms of assembly, homodimer in the absence of bound ligand. Peptide hormone binding leads to dissociation of the homodimer. N-glycosylated.

The protein resides in the cell membrane. In terms of biological role, G-protein-coupled receptor for parathyroid hormone (PTH) and for parathyroid hormone-related peptide (PTHLH). Ligand binding causes a conformation change that triggers signaling via guanine nucleotide-binding proteins (G proteins) and modulates the activity of downstream effectors, such as adenylate cyclase (cAMP). PTH1R is coupled to G(s) G alpha proteins and mediates activation of adenylate cyclase activity. PTHLH dissociates from PTH1R more rapidly than PTH; as consequence, the cAMP response induced by PTHLH decays faster than the response induced by PTH. The sequence is that of Parathyroid hormone/parathyroid hormone-related peptide receptor (PTH1R) from Bos taurus (Bovine).